A 410-amino-acid polypeptide reads, in one-letter code: Lissencephaly-1 homolog (410 aa).

Positions 7 to 39 (QRDELNRAIADYLRSNGYEEAYSVFKKEAELDM) constitute a LisH domain. Residues 56-82 (TSVIRLQKKVMELESKLNEAKEEFTSG) are a coiled coil. WD repeat units lie at residues 106–147 (GHRS…RTLK), 148–187 (GHTD…CIRT), 190–229 (GHDH…CVKT), 232–271 (GHRE…CKAE), 274–333 (EHEH…CLMT), 336–377 (GHDN…KTLN), and 379–410 (HEHF…WECR).

Belongs to the WD repeat LIS1/nudF family. As to quaternary structure, can self-associate. Component of the cytosolic PAF-AH (I) heterotetrameric enzyme, which is composed of PAFAH1B1 (beta), PAFAH1B2 (alpha2) and PAFAH1B3 (alpha1) subunits. The catalytic activity of the enzyme resides in the alpha1 (PAFAH1B3) and alpha2 (PAFAH1B2) subunits, whereas the beta subunit (PAFAH1B1) has regulatory activity. Trimer formation is not essential for the catalytic activity. Interacts with dynein, dynactin, nde1 and ndel1.

Its subcellular location is the cytoplasm. The protein localises to the cytoskeleton. The protein resides in the microtubule organizing center. It is found in the centrosome. Its function is as follows. Regulatory subunit (beta subunit) of the cytosolic type I platelet-activating factor (PAF) acetylhydrolase (PAF-AH (I)), an enzyme that catalyzes the hydrolyze of the acetyl group at the sn-2 position of PAF and its analogs and participates in the PAF inactivation. Positively regulates the activity of the minus-end directed microtubule motor protein dynein. May enhance dynein-mediated microtubule sliding by targeting dynein to the microtubule plus end. Required for several dynein- and microtubule-dependent processes such as the maintenance of Golgi integrity, the peripheral transport of microtubule fragments and the coupling of the nucleus and centrosome. May be required for proliferation of neuronal precursors and neuronal migration. The sequence is that of Lissencephaly-1 homolog (pafah1b1) from Xenopus tropicalis (Western clawed frog).